Reading from the N-terminus, the 227-residue chain is Small ribosomal subunit protein uS3 (227 aa).

Positions I39–D109 constitute a KH type-2 domain.

It belongs to the universal ribosomal protein uS3 family. In terms of assembly, part of the 30S ribosomal subunit. Forms a tight complex with proteins S10 and S14.

Functionally, binds the lower part of the 30S subunit head. Binds mRNA in the 70S ribosome, positioning it for translation. This Mesomycoplasma hyopneumoniae (strain 232) (Mycoplasma hyopneumoniae) protein is Small ribosomal subunit protein uS3.